The chain runs to 1028 residues: Beta-galactosidase (1028 aa).

Substrate contacts are provided by N104 and D203. Na(+) is bound at residue D203. Mg(2+)-binding residues include E418, H420, and E463. Residues E463 and E539–H542 each bind substrate. E463 functions as the Proton donor in the catalytic mechanism. E539 (nucleophile) is an active-site residue. N599 contributes to the Mg(2+) binding site. Positions 603 and 606 each coordinate Na(+). 2 residues coordinate substrate: N606 and W1003.

Belongs to the glycosyl hydrolase 2 family. In terms of assembly, homotetramer. The cofactor is Mg(2+). It depends on Na(+) as a cofactor.

The enzyme catalyses Hydrolysis of terminal non-reducing beta-D-galactose residues in beta-D-galactosides.. The chain is Beta-galactosidase from Enterobacter cloacae.